Consider the following 229-residue polypeptide: Heptaprenylglyceryl phosphate synthase (229 aa).

Lysine 12 serves as a coordination point for sn-glycerol 1-phosphate. Residues aspartate 14 and serine 40 each coordinate Mg(2+). Sn-glycerol 1-phosphate-binding positions include 159–164, glycine 189, and 209–210; these read YLEYSG and GN.

It belongs to the GGGP/HepGP synthase family. Group I subfamily. Homodimer. The cofactor is Mg(2+).

It carries out the reaction sn-glycerol 1-phosphate + all-trans-heptaprenyl diphosphate = 3-heptaprenyl-sn-glycero-1-phosphate + diphosphate. The protein operates within membrane lipid metabolism; glycerophospholipid metabolism. Functionally, prenyltransferase that catalyzes in vivo the transfer of the heptaprenyl moiety of heptaprenyl pyrophosphate (HepPP; 35 carbon atoms) to the C3 hydroxyl of sn-glycerol-1-phosphate (G1P), producing heptaprenylglyceryl phosphate (HepGP). This reaction is an ether-bond-formation step in the biosynthesis of archaea-type G1P-based membrane lipids found in Bacillales. This Bacillus cereus (strain AH187) protein is Heptaprenylglyceryl phosphate synthase.